The chain runs to 177 residues: ATP synthase subunit b (177 aa).

Residues 16–36 (HLLLANMIVTIVVFLLLLILL) form a helical membrane-spanning segment.

This sequence belongs to the ATPase B chain family. In terms of assembly, F-type ATPases have 2 components, F(1) - the catalytic core - and F(0) - the membrane proton channel. F(1) has five subunits: alpha(3), beta(3), gamma(1), delta(1), epsilon(1). F(0) has three main subunits: a(1), b(2) and c(10-14). The alpha and beta chains form an alternating ring which encloses part of the gamma chain. F(1) is attached to F(0) by a central stalk formed by the gamma and epsilon chains, while a peripheral stalk is formed by the delta and b chains.

It localises to the cell membrane. F(1)F(0) ATP synthase produces ATP from ADP in the presence of a proton or sodium gradient. F-type ATPases consist of two structural domains, F(1) containing the extramembraneous catalytic core and F(0) containing the membrane proton channel, linked together by a central stalk and a peripheral stalk. During catalysis, ATP synthesis in the catalytic domain of F(1) is coupled via a rotary mechanism of the central stalk subunits to proton translocation. In terms of biological role, component of the F(0) channel, it forms part of the peripheral stalk, linking F(1) to F(0). In Exiguobacterium sibiricum (strain DSM 17290 / CCUG 55495 / CIP 109462 / JCM 13490 / 255-15), this protein is ATP synthase subunit b.